We begin with the raw amino-acid sequence, 359 residues long: Type-1 angiotensin II receptor (359 aa).

At 1–25 the chain is on the extracellular side; sequence MILNSSTEDGIKRIQDDCPKAGRHN. A glycan (N-linked (GlcNAc...) asparagine) is linked at asparagine 4. Angiotensin II-binding residues include glutamine 15 and aspartate 17. 2 disulfides stabilise this stretch: cysteine 18/cysteine 274 and cysteine 101/cysteine 180. The helical transmembrane segment at 26–55 threads the bilayer; that stretch reads YIFIMIPTLYSIIFVVGLFGNSLVVIVIYF. Residues 56-61 are Cytoplasmic-facing; sequence YMKLKT. Residues 62–89 form a helical membrane-spanning segment; that stretch reads VASVFLLNLALADLCFLLTLPLWAVYTA. Over 90–98 the chain is Extracellular; it reads MEYRWPFGN. A helical membrane pass occupies residues 99-125; sequence YLCKIASGSVSFNLYASVFLLTCLSID. Residues 126 to 141 lie on the Cytoplasmic side of the membrane; the sequence is RYLAIVHPMKSRLRRT. Residues 142-165 form a helical membrane-spanning segment; sequence MLVAKVTCIIIWLLAGLASLPTII. Over 166–190 the chain is Extracellular; that stretch reads HRNVFFIENTNITVCAFHYESQNST. Arginine 167 is an angiotensin II binding site. An N-linked (GlcNAc...) asparagine glycan is attached at asparagine 176. Phenylalanine 182, histidine 183, and tyrosine 184 together coordinate angiotensin II. Asparagine 188 carries an N-linked (GlcNAc...) asparagine glycan. Residues 191-216 form a helical membrane-spanning segment; it reads LPVGLGLTKNILGFLFPFLIILTSYT. Lysine 199 provides a ligand contact to angiotensin II. Over 217 to 239 the chain is Cytoplasmic; that stretch reads LIWKTLKKAYEIQKNKPRKDDIF. The helical transmembrane segment at 240-268 threads the bilayer; that stretch reads KIILAIVLFFFFSWVPHQIFTFMDVLIQL. Residues 269-278 are Extracellular-facing; the sequence is GLIRDCKIED. The helical transmembrane segment at 279–304 threads the bilayer; it reads IVDTAMPITICLAYFNNCLNPPFYGF. At 305 to 359 the chain is on the cytoplasmic side; the sequence is LGKKFKKYFLQLLKYIPPKAKSHSNLSTKMSTLSYRPSENGNSSTKKPAPCTEVE. Positions 335–350 are enriched in polar residues; that stretch reads STLSYRPSENGNSSTK. Residues 335–359 are disordered; the sequence is STLSYRPSENGNSSTKKPAPCTEVE. Cysteine 355 carries the S-palmitoyl cysteine lipid modification.

Belongs to the G-protein coupled receptor 1 family. As to quaternary structure, interacts with MAS1. Interacts with ARRB1. Interacts with FLNA (via filamin repeat 21); increases PKA-mediated phosphorylation of FLNA. In terms of processing, C-terminal Ser or Thr residues may be phosphorylated.

It localises to the cell membrane. Receptor for angiotensin II, a vasoconstricting peptide, which acts as a key regulator of blood pressure and sodium retention by the kidney. The activated receptor in turn couples to G-alpha proteins G(q) (GNAQ, GNA11, GNA14 or GNA15) and thus activates phospholipase C and increases the cytosolic Ca(2+) concentrations, which in turn triggers cellular responses such as stimulation of protein kinase C. The chain is Type-1 angiotensin II receptor (AGTR1) from Ovis aries (Sheep).